The chain runs to 1360 residues: DNA-directed RNA polymerase subunit beta (1360 aa).

It belongs to the RNA polymerase beta chain family. In terms of assembly, the RNAP catalytic core consists of 2 alpha, 1 beta, 1 beta' and 1 omega subunit. When a sigma factor is associated with the core the holoenzyme is formed, which can initiate transcription.

The enzyme catalyses RNA(n) + a ribonucleoside 5'-triphosphate = RNA(n+1) + diphosphate. Functionally, DNA-dependent RNA polymerase catalyzes the transcription of DNA into RNA using the four ribonucleoside triphosphates as substrates. The chain is DNA-directed RNA polymerase subunit beta from Caulobacter sp. (strain K31).